A 175-amino-acid polypeptide reads, in one-letter code: ATP synthase subunit b, chloroplastic (175 aa).

A helical transmembrane segment spans residues 26 to 44 (VINLAVVIGVVVSFVGDAV).

The protein belongs to the ATPase B chain family. F-type ATPases have 2 components, F(1) - the catalytic core - and F(0) - the membrane proton channel. F(1) has five subunits: alpha(3), beta(3), gamma(1), delta(1), epsilon(1). F(0) has four main subunits: a(1), b(1), b'(1) and c(10-14). The alpha and beta chains form an alternating ring which encloses part of the gamma chain. F(1) is attached to F(0) by a central stalk formed by the gamma and epsilon chains, while a peripheral stalk is formed by the delta, b and b' chains.

The protein resides in the plastid. It localises to the chloroplast thylakoid membrane. Its function is as follows. F(1)F(0) ATP synthase produces ATP from ADP in the presence of a proton or sodium gradient. F-type ATPases consist of two structural domains, F(1) containing the extramembraneous catalytic core and F(0) containing the membrane proton channel, linked together by a central stalk and a peripheral stalk. During catalysis, ATP synthesis in the catalytic domain of F(1) is coupled via a rotary mechanism of the central stalk subunits to proton translocation. In terms of biological role, component of the F(0) channel, it forms part of the peripheral stalk, linking F(1) to F(0). The sequence is that of ATP synthase subunit b, chloroplastic from Tupiella akineta (Green alga).